An 85-amino-acid chain; its full sequence is NAD(P)H-quinone oxidoreductase subunit O (85 aa).

It belongs to the complex I NdhO subunit family. In terms of assembly, NDH-1 can be composed of about 15 different subunits; different subcomplexes with different compositions have been identified which probably have different functions.

The protein localises to the cellular thylakoid membrane. It carries out the reaction a plastoquinone + NADH + (n+1) H(+)(in) = a plastoquinol + NAD(+) + n H(+)(out). The enzyme catalyses a plastoquinone + NADPH + (n+1) H(+)(in) = a plastoquinol + NADP(+) + n H(+)(out). Its function is as follows. NDH-1 shuttles electrons from an unknown electron donor, via FMN and iron-sulfur (Fe-S) centers, to quinones in the respiratory and/or the photosynthetic chain. The immediate electron acceptor for the enzyme in this species is believed to be plastoquinone. Couples the redox reaction to proton translocation, and thus conserves the redox energy in a proton gradient. Cyanobacterial NDH-1 also plays a role in inorganic carbon-concentration. The sequence is that of NAD(P)H-quinone oxidoreductase subunit O from Synechococcus sp. (strain WH7803).